Reading from the N-terminus, the 751-residue chain is MVTGDPVATKTPNAADSDDNDFTASMSHLTIGQQIQELSKQLQNTKEELHQQVRDKHGALLQQATHAGRFDAALNALAEDVQRVRETGHRLKNQVDTQYQQVENQTQVLGRLHDVSHLLRSAGTLLSLTAKLKATKDVLRLAEIHFELGQLIEDKELKDIDFIQQERAYVISSAQKIRNLTQMQLVTGLQERNENQVVNALKIFMNFNTLEKSLDNLLATFIADMEQSLKECFAGNDISVLNKSPTHNVSKPAPSRGPGKTPQLTTTQNFRAKFWKSLHWLLYDELFETCTQIKLLKTALEQINQFGYTSESSDQCIPQRFWQQVQQLLRKSFDECPQHVTQTLQEGLSKLLTSARGLEQRLHGEFQFDNELFAPLEVGYVSKCAANFKACLAGVDLPGNETVDNFIRVASTELSAALIDSRLTNAIANVFAACGKELCTKLEAQIKLGADSKQVVDLPNLQQQQNTQLANVLFYYKDSVRRMLSDLHVHFEKTPGTAREIISRSLEQADLLIGTILQQIMESIITTISIIVLSMHREPGLNSERMSTTGPSMYMKELQEFVNRSWSHHIALFDDKQMTKKCGHELAKRCIELFLHNVCILRPLSSCGRQRLKQDCQHMEQALKPLCPNLAELGKPSRLLRAMSLLIVQTAEELVKQTIGEDSLVPSYIVLLLLFGHAGADLQSPHTTANWSNERLIEWLDGHTAEREKLELISGALQRYRDNARRKNIQQYDEVYPMMVDYFEQALKALP.

2 disordered regions span residues methionine 1 to aspartate 21 and serine 244 to glutamine 263.

Belongs to the COG5 family. In terms of assembly, component of the conserved oligomeric Golgi complex which is composed of eight different subunits and is required for normal Golgi morphology and localization.

Its subcellular location is the golgi apparatus membrane. In terms of biological role, required for normal Golgi function and necessary during spermatogenesis. Required for cleavage furrow ingression during cytokinesis in dividing spermatocytes and for the extensive polarized cell growth that accompanies spermatid elongation. In Drosophila melanogaster (Fruit fly), this protein is Conserved oligomeric Golgi complex subunit 5 (fws).